Consider the following 234-residue polypeptide: Enolase-phosphatase E1 (234 aa).

Residues Asp13 and Glu15 each contribute to the Mg(2+) site. Substrate is bound by residues 127–128 (SS) and Lys164. Asp191 is a Mg(2+) binding site.

This sequence belongs to the HAD-like hydrolase superfamily. MasA/MtnC family. Monomer. Mg(2+) is required as a cofactor.

It is found in the cytoplasm. The protein resides in the nucleus. The enzyme catalyses 5-methylsulfanyl-2,3-dioxopentyl phosphate + H2O = 1,2-dihydroxy-5-(methylsulfanyl)pent-1-en-3-one + phosphate. The protein operates within amino-acid biosynthesis; L-methionine biosynthesis via salvage pathway; L-methionine from S-methyl-5-thio-alpha-D-ribose 1-phosphate: step 3/6. It functions in the pathway amino-acid biosynthesis; L-methionine biosynthesis via salvage pathway; L-methionine from S-methyl-5-thio-alpha-D-ribose 1-phosphate: step 4/6. In terms of biological role, bifunctional enzyme that catalyzes the enolization of 2,3-diketo-5-methylthiopentyl-1-phosphate (DK-MTP-1-P) into the intermediate 2-hydroxy-3-keto-5-methylthiopentenyl-1-phosphate (HK-MTPenyl-1-P), which is then dephosphorylated to form the acireductone 1,2-dihydroxy-3-keto-5-methylthiopentene (DHK-MTPene). In Podospora anserina (strain S / ATCC MYA-4624 / DSM 980 / FGSC 10383) (Pleurage anserina), this protein is Enolase-phosphatase E1.